We begin with the raw amino-acid sequence, 68 residues long: MGMRMMFTMFLLVVLATTVVSINLDHAFDGRNAAANNKATDLMARTVRRFCSDPPCRISNPESCGWEP.

The N-terminal stretch at 1–21 is a signal peptide; that stretch reads MGMRMMFTMFLLVVLATTVVS. A propeptide spanning residues 22–49 is cleaved from the precursor; that stretch reads INLDHAFDGRNAAANNKATDLMARTVRR. C51 and C64 are oxidised to a cystine.

It belongs to the conotoxin A superfamily. In terms of tissue distribution, expressed by the venom duct.

Its subcellular location is the secreted. Its function is as follows. Alpha-conotoxins act on postsynaptic membranes, they bind to the nicotinic acetylcholine receptors (nAChR) and thus inhibit them. The sequence is that of Putative alpha-conotoxin Qc alphaL-1 from Conus quercinus (Oak cone).